A 419-amino-acid chain; its full sequence is Mitogen-activated protein kinase spm1 (419 aa).

In terms of domain architecture, Protein kinase spans 23–314; it reads YTVTKELGQG…VEEALEHPYL (292 aa). Residues 29-37 and Lys-52 each bind ATP; that span reads LGQGAYGIV. Catalysis depends on Asp-149, which acts as the Proton acceptor.

The protein belongs to the protein kinase superfamily. Ser/Thr protein kinase family. MAP kinase subfamily. Mg(2+) is required as a cofactor. Post-translationally, phosphorylated by the MAP kinase kinase mkk1.

It carries out the reaction L-seryl-[protein] + ATP = O-phospho-L-seryl-[protein] + ADP + H(+). The catalysed reaction is L-threonyl-[protein] + ATP = O-phospho-L-threonyl-[protein] + ADP + H(+). In terms of biological role, mitogen-activated protein kinase, part of the mkh1-mkk1-spm1 MAPK cascade that regulates vegetative growth, conidial formation, colony surface hydrophobicity, osmotic stress, cell wall integrity maintenance, carbon and nitrogen source utilization, chitin distribution, septa formation, and pathogenicity. This Cytospora mali (Apple Valsa canker fungus) protein is Mitogen-activated protein kinase spm1.